A 218-amino-acid chain; its full sequence is Small ribosomal subunit protein uS3c (218 aa).

The region spanning 47 to 118 (IQKTIKISSG…KLNIAITRIA (72 aa)) is the KH type-2 domain.

Belongs to the universal ribosomal protein uS3 family. As to quaternary structure, part of the 30S ribosomal subunit.

It localises to the plastid. Its subcellular location is the chloroplast. This chain is Small ribosomal subunit protein uS3c (rps3), found in Lotus japonicus (Lotus corniculatus var. japonicus).